Here is a 473-residue protein sequence, read N- to C-terminus: Trigger factor (473 aa).

The 86-residue stretch at 171 to 256 (GDRVTIDFVG…VTKIQAAGEA (86 aa)) folds into the PPIase FKBP-type domain. A disordered region spans residues 439-473 (KEALFADEDGDDTTGGKPADKAEAKDESKTEAKAD). Basic and acidic residues predominate over residues 456 to 473 (PADKAEAKDESKTEAKAD).

Belongs to the FKBP-type PPIase family. Tig subfamily.

The protein localises to the cytoplasm. It carries out the reaction [protein]-peptidylproline (omega=180) = [protein]-peptidylproline (omega=0). Involved in protein export. Acts as a chaperone by maintaining the newly synthesized protein in an open conformation. Functions as a peptidyl-prolyl cis-trans isomerase. This Methylobacterium radiotolerans (strain ATCC 27329 / DSM 1819 / JCM 2831 / NBRC 15690 / NCIMB 10815 / 0-1) protein is Trigger factor.